The primary structure comprises 367 residues: Anhydro-N-acetylmuramic acid kinase (367 aa).

13 to 20 (GTSMDGAD) lines the ATP pocket.

The protein belongs to the anhydro-N-acetylmuramic acid kinase family.

The enzyme catalyses 1,6-anhydro-N-acetyl-beta-muramate + ATP + H2O = N-acetyl-D-muramate 6-phosphate + ADP + H(+). It participates in amino-sugar metabolism; 1,6-anhydro-N-acetylmuramate degradation. The protein operates within cell wall biogenesis; peptidoglycan recycling. Its function is as follows. Catalyzes the specific phosphorylation of 1,6-anhydro-N-acetylmuramic acid (anhMurNAc) with the simultaneous cleavage of the 1,6-anhydro ring, generating MurNAc-6-P. Is required for the utilization of anhMurNAc either imported from the medium or derived from its own cell wall murein, and thus plays a role in cell wall recycling. This is Anhydro-N-acetylmuramic acid kinase from Neisseria meningitidis serogroup A / serotype 4A (strain DSM 15465 / Z2491).